A 125-amino-acid chain; its full sequence is Large ribosomal subunit protein bL12 (125 aa).

Belongs to the bacterial ribosomal protein bL12 family. In terms of assembly, homodimer. Part of the ribosomal stalk of the 50S ribosomal subunit. Forms a multimeric L10(L12)X complex, where L10 forms an elongated spine to which 2 to 4 L12 dimers bind in a sequential fashion. Binds GTP-bound translation factors.

In terms of biological role, forms part of the ribosomal stalk which helps the ribosome interact with GTP-bound translation factors. Is thus essential for accurate translation. The polypeptide is Large ribosomal subunit protein bL12 (Methylobacterium radiotolerans (strain ATCC 27329 / DSM 1819 / JCM 2831 / NBRC 15690 / NCIMB 10815 / 0-1)).